Here is a 304-residue protein sequence, read N- to C-terminus: D-alanine--D-alanine ligase (304 aa).

The 202-residue stretch at 100–301 (KLVALQSGIP…FGEFLEDLIK (202 aa)) folds into the ATP-grasp domain. 129–184 (ERKLGSPFIVKPCDVGSTIGLSLVRSASEYEVALEEAFRFSDRLLLEEFIDGFEVT) provides a ligand contact to ATP. Mg(2+) contacts are provided by aspartate 256, glutamate 268, and asparagine 270.

The protein belongs to the D-alanine--D-alanine ligase family. It depends on Mg(2+) as a cofactor. The cofactor is Mn(2+).

Its subcellular location is the cytoplasm. The enzyme catalyses 2 D-alanine + ATP = D-alanyl-D-alanine + ADP + phosphate + H(+). Its pathway is cell wall biogenesis; peptidoglycan biosynthesis. In terms of biological role, cell wall formation. The protein is D-alanine--D-alanine ligase of Coprothermobacter proteolyticus (strain ATCC 35245 / DSM 5265 / OCM 4 / BT).